The following is a 337-amino-acid chain: Cysteine proteinase 3 (337 aa).

The signal sequence occupies residues 1–21 (MRLSITLIFTLIVLSISFISA). A propeptide spans 22-120 (GNVFSHKQYQ…GLRLNRPQFK (99 aa)) (activation peptide). Cystine bridges form between Cys142–Cys185, Cys176–Cys219, and Cys277–Cys326. Cys145 is an active-site residue. Catalysis depends on residues His284 and Asn304.

This sequence belongs to the peptidase C1 family.

It localises to the lysosome. The chain is Cysteine proteinase 3 (cprC) from Dictyostelium discoideum (Social amoeba).